Here is a 126-residue protein sequence, read N- to C-terminus: Histone H2B 3 (126 aa).

A compositionally biased stretch (low complexity) spans Met1–Lys12. The disordered stretch occupies residues Met1 to Arg34. Lys6 and Lys13 each carry N6-acetyllysine. Positions Lys13–Arg34 are enriched in basic residues. Ser15 carries the phosphoserine modification. N6-acetyllysine is present on residues Lys16 and Lys21. An O-linked (GlcNAc) serine glycan is attached at Ser113. Lys121 is covalently cross-linked (Glycyl lysine isopeptide (Lys-Gly) (interchain with G-Cter in ubiquitin)).

It belongs to the histone H2B family. The nucleosome is a histone octamer containing two molecules each of H2A, H2B, H3 and H4 assembled in one H3-H4 heterotetramer and two H2A-H2B heterodimers. The octamer wraps approximately 147 bp of DNA. In terms of processing, monoubiquitination of Lys-121 by the BRE1 gives a specific tag for epigenetic transcriptional activation and is also prerequisite for histone H3 'Lys-4' and 'Lys-79' methylation. Post-translationally, phosphorylated on Ser-15 during apoptosis; which facilitates apoptotic chromatin condensation. GlcNAcylation at Ser-113 promotes monoubiquitination of Lys-121. It fluctuates in response to extracellular glucose, and associates with transcribed genes.

The protein localises to the nucleus. It is found in the chromosome. Functionally, core component of nucleosome. Nucleosomes wrap and compact DNA into chromatin, limiting DNA accessibility to the cellular machineries which require DNA as a template. Histones thereby play a central role in transcription regulation, DNA repair, DNA replication and chromosomal stability. DNA accessibility is regulated via a complex set of post-translational modifications of histones, also called histone code, and nucleosome remodeling. In Danio rerio (Zebrafish), this protein is Histone H2B 3 (hist2h2l).